The primary structure comprises 304 residues: MADGSELYTVESILEHRKKKGKSEFYIKWLGYDHTHNSWEPKENIVDPTLIEAFFTREAARKAEIKAKKDKMAAGKKGASSKASASVSKASASTPARGAKAAPKPPPKKSPPKRQRLAGGDIRPDSDTDEEHSSADKKSKAEDEEEVEDDEEPVPKKKKEVQEEPEEEESVEGEDEEESQEVEDLKEDEKMEEDEKEEEEDVQLESEKNEKEEEEEKVEEKKEEEEEEEEEEIQLVIVEKTVIETTIVEPAVATPEPSEPSSSEKAVVENGSSSAAAGNSASKPEVSAVEVVTVEDDDDIAIIE.

The region spanning 8–66 is the Chromo domain; that stretch reads YTVESILEHRKKKGKSEFYIKWLGYDHTHNSWEPKENIVDPTLIEAFFTREAARKAEIK. Positions 63-73 are enriched in basic and acidic residues; sequence AEIKAKKDKMA. Disordered stretches follow at residues 63 to 235 and 248 to 304; these read AEIK…EIQL and VEPA…AIIE. Low complexity predominate over residues 75 to 102; that stretch reads GKKGASSKASASVSKASASTPARGAKAA. Positions 106–116 are enriched in basic residues; sequence PPKKSPPKRQR. The span at 122–141 shows a compositional bias: basic and acidic residues; it reads IRPDSDTDEEHSSADKKSKA. 3 stretches are compositionally biased toward acidic residues: residues 142 to 152, 163 to 204, and 212 to 233; these read EDEEEVEDDEE, EEPE…DVQL, and EEEE…EEEI. A compositionally biased stretch (low complexity) spans 248-292; sequence VEPAVATPEPSEPSSSEKAVVENGSSSAAAGNSASKPEVSAVEVV. Positions 293 to 304 are enriched in acidic residues; sequence TVEDDDDIAIIE.

The protein localises to the nucleus. The protein resides in the chromosome. The sequence is that of Chromo domain-containing protein cec-1 (cec-1) from Caenorhabditis elegans.